Here is a 406-residue protein sequence, read N- to C-terminus: Elongation factor Ts, mitochondrial (406 aa).

A disordered region spans residues Ala387–Ala406.

The protein belongs to the EF-Ts family.

It is found in the mitochondrion. Functionally, associates with the EF-Tu.GDP complex and induces the exchange of GDP to GTP. It remains bound to the aminoacyl-tRNA.EF-Tu.GTP complex up to the GTP hydrolysis stage on the ribosome. The polypeptide is Elongation factor Ts, mitochondrial (Malassezia globosa (strain ATCC MYA-4612 / CBS 7966) (Dandruff-associated fungus)).